The following is a 152-amino-acid chain: Ubiquitin-conjugating enzyme E2 A (152 aa).

The 147-residue stretch at Pro4–Arg150 folds into the UBC core domain. The Glycyl thioester intermediate role is filled by Cys88. The residue at position 120 (Ser120) is a Phosphoserine; by CDK9.

It belongs to the ubiquitin-conjugating enzyme family. Interacts with RAD18 and WAC. Interacts with RFPL4A and CCNB1. Phosphorylation at Ser-120 by CDK9 increases activity towards histone H2B.

The protein resides in the late endosome. Its subcellular location is the lysosome. It catalyses the reaction S-ubiquitinyl-[E1 ubiquitin-activating enzyme]-L-cysteine + [E2 ubiquitin-conjugating enzyme]-L-cysteine = [E1 ubiquitin-activating enzyme]-L-cysteine + S-ubiquitinyl-[E2 ubiquitin-conjugating enzyme]-L-cysteine.. It participates in protein modification; protein ubiquitination. Its function is as follows. E2 ubiquitin-conjugating enzyme that accepts ubiquitin from the ubiquitin-activating enzyme E1 and transfers it to a E3 ubiquitin-protein ligase. In vitro catalyzes 'Lys-11', as well as 'Lys-48'-linked polyubiquitination. Together with the E3 enzyme BRE1 (RNF20 and/or RNF40), plays a role in transcription regulation by catalyzing the monoubiquitination of histone H2B at 'Lys-120' to form H2BK120ub1. H2BK120ub1 gives a specific tag for epigenetic transcriptional activation, elongation by RNA polymerase II, telomeric silencing, and is also a prerequisite for H3K4me and H3K79me formation. Involved in mitophagy by acting as a E2 ubiquitin-conjugating enzyme for PRKN. In association with the E3 enzyme UBR4, is involved in N-end rule-dependent protein degradation. In association with the E3 ubiquitin-protein ligase complex SIFI, inhibits the mitochondrial stress response by acting as a E2 ubiquitin-conjugating enzyme for UBR4 and KCMF1. The protein is Ubiquitin-conjugating enzyme E2 A of Homo sapiens (Human).